The primary structure comprises 315 residues: 4-hydroxy-3-methylbut-2-enyl diphosphate reductase (315 aa).

Residue C12 participates in [4Fe-4S] cluster binding. (2E)-4-hydroxy-3-methylbut-2-enyl diphosphate is bound by residues H41 and H74. Dimethylallyl diphosphate is bound by residues H41 and H74. H41 and H74 together coordinate isopentenyl diphosphate. Residue C96 coordinates [4Fe-4S] cluster. Residue H124 coordinates (2E)-4-hydroxy-3-methylbut-2-enyl diphosphate. H124 is a dimethylallyl diphosphate binding site. Position 124 (H124) interacts with isopentenyl diphosphate. The active-site Proton donor is E126. A (2E)-4-hydroxy-3-methylbut-2-enyl diphosphate-binding site is contributed by T168. C198 provides a ligand contact to [4Fe-4S] cluster. Positions 226, 227, 228, and 270 each coordinate (2E)-4-hydroxy-3-methylbut-2-enyl diphosphate. The dimethylallyl diphosphate site is built by S226, S227, N228, and S270. Isopentenyl diphosphate contacts are provided by S226, S227, N228, and S270.

This sequence belongs to the IspH family. [4Fe-4S] cluster serves as cofactor.

The enzyme catalyses isopentenyl diphosphate + 2 oxidized [2Fe-2S]-[ferredoxin] + H2O = (2E)-4-hydroxy-3-methylbut-2-enyl diphosphate + 2 reduced [2Fe-2S]-[ferredoxin] + 2 H(+). It catalyses the reaction dimethylallyl diphosphate + 2 oxidized [2Fe-2S]-[ferredoxin] + H2O = (2E)-4-hydroxy-3-methylbut-2-enyl diphosphate + 2 reduced [2Fe-2S]-[ferredoxin] + 2 H(+). It functions in the pathway isoprenoid biosynthesis; dimethylallyl diphosphate biosynthesis; dimethylallyl diphosphate from (2E)-4-hydroxy-3-methylbutenyl diphosphate: step 1/1. The protein operates within isoprenoid biosynthesis; isopentenyl diphosphate biosynthesis via DXP pathway; isopentenyl diphosphate from 1-deoxy-D-xylulose 5-phosphate: step 6/6. Catalyzes the conversion of 1-hydroxy-2-methyl-2-(E)-butenyl 4-diphosphate (HMBPP) into a mixture of isopentenyl diphosphate (IPP) and dimethylallyl diphosphate (DMAPP). Acts in the terminal step of the DOXP/MEP pathway for isoprenoid precursor biosynthesis. The protein is 4-hydroxy-3-methylbut-2-enyl diphosphate reductase of Pseudomonas fluorescens (strain SBW25).